Consider the following 244-residue polypeptide: 5-oxoprolinase subunit A (244 aa).

This sequence belongs to the LamB/PxpA family. As to quaternary structure, forms a complex composed of PxpA, PxpB and PxpC.

It catalyses the reaction 5-oxo-L-proline + ATP + 2 H2O = L-glutamate + ADP + phosphate + H(+). Its function is as follows. Catalyzes the cleavage of 5-oxoproline to form L-glutamate coupled to the hydrolysis of ATP to ADP and inorganic phosphate. This Escherichia coli O139:H28 (strain E24377A / ETEC) protein is 5-oxoprolinase subunit A.